A 494-amino-acid chain; its full sequence is MIKFALALTLCLAGASLSLAQHNPQWWGNRNTIVHLFEWKWSDIAEECETFLAPRGFAGVQVSPVNENIISAGRPWWERYQPISYKLTTRSGNEEEFADMVRRCNDVGIRIYVDVLLNHMSGDFDGVAVGTAGTEAEPSKKSFPGVPYTAQDFHPSCEITDWNNRFQVQECELVGLKDLNQHSDYVRSKLIEFLDHLIELGVAGFRVDAAKHMAAEDLEYIYGSLSNLNIEHGFPHNARPFIFQEVIDHGHETVSREEYNQLGAVTEFRFSEEIGKAFRGNNALKWLQSWGTDWGFLNSEQALTFVDNHDNQRDQGSVLNYKSPKQYKMATAFHLAYPYGISRVMSSFAFDDHDTPPPQDAQENIISPEFDEDGACVNGWICEHRWRQIYAMVGFKNAVRDTELTGWWDNGDNQISFCRGNKGFLAVNNNLYDLSQELNTCLPAGEYCDVISGSLIDGACTGKSVTVNEYGYGYIHIGSDDFDGVLALHVNAKV.

Positions 1–20 (MIKFALALTLCLAGASLSLA) are cleaved as a signal peptide. Pyrrolidone carboxylic acid is present on Q21. C48 and C104 are oxidised to a cystine. Residues N118, Q169, and D178 each contribute to the Ca(2+) site. A disulfide bridge connects residues C157 and C171. R206 contributes to the chloride binding site. Residue D208 is the Nucleophile of the active site. Residue H212 participates in Ca(2+) binding. Catalysis depends on E245, which acts as the Proton donor. Chloride contacts are provided by N308 and R343. 3 disulfide bridges follow: C376–C382, C418–C441, and C448–C460.

It belongs to the glycosyl hydrolase 13 family. As to quaternary structure, monomer. Ca(2+) serves as cofactor. It depends on chloride as a cofactor.

The protein localises to the secreted. It carries out the reaction Endohydrolysis of (1-&gt;4)-alpha-D-glucosidic linkages in polysaccharides containing three or more (1-&gt;4)-alpha-linked D-glucose units.. The protein is Alpha-amylase-related protein (Amyrel) of Drosophila jambulina (Fruit fly).